Consider the following 328-residue polypeptide: Formimidoylglutamase (328 aa).

Mn(2+)-binding residues include His-133, Asp-159, His-161, Asp-163, Asp-253, and Asp-255.

This sequence belongs to the arginase family. The cofactor is Mn(2+).

The enzyme catalyses N-formimidoyl-L-glutamate + H2O = formamide + L-glutamate. It functions in the pathway amino-acid degradation; L-histidine degradation into L-glutamate; L-glutamate from N-formimidoyl-L-glutamate (hydrolase route): step 1/1. In terms of biological role, catalyzes the conversion of N-formimidoyl-L-glutamate to L-glutamate and formamide. This Streptococcus pyogenes serotype M1 protein is Formimidoylglutamase.